The primary structure comprises 113 residues: Hydrogenase maturation factor HypA 1 (113 aa).

Position 2 (histidine 2) interacts with Ni(2+). Cysteine 73, cysteine 76, cysteine 89, and cysteine 92 together coordinate Zn(2+).

Belongs to the HypA/HybF family.

Functionally, involved in the maturation of [NiFe] hydrogenases. Required for nickel insertion into the metal center of the hydrogenase. This is Hydrogenase maturation factor HypA 1 from Bradyrhizobium diazoefficiens (strain JCM 10833 / BCRC 13528 / IAM 13628 / NBRC 14792 / USDA 110).